We begin with the raw amino-acid sequence, 247 residues long: Segregation and condensation protein A (247 aa).

This sequence belongs to the ScpA family. In terms of assembly, component of a cohesin-like complex composed of ScpA, ScpB and the Smc homodimer, in which ScpA and ScpB bind to the head domain of Smc. The presence of the three proteins is required for the association of the complex with DNA.

The protein localises to the cytoplasm. Its function is as follows. Participates in chromosomal partition during cell division. May act via the formation of a condensin-like complex containing Smc and ScpB that pull DNA away from mid-cell into both cell halves. In Bacillus anthracis (strain A0248), this protein is Segregation and condensation protein A.